Reading from the N-terminus, the 1801-residue chain is MASSLAAQLSQIAANSTNQLNLKAQRIAHSHSLIFDKKVAGSQDFDTIYDICFEGFQELCQLDPRFAQFERTIFSPQSKTEERTEMNVAQNKELDTVLEAFLALVGGRLLLSPAVKAADWLIRRFRVHEYNTTATILTFLPYYSTPLFLNLLSILPEDLTPTFKVLLPYKKSLINPPRHPLVHSATTNKPFLAALNAYVIQASRQQSAHHALLSFWAGIFTEAVSGMLDASRSGRRGVEKVKHDDIVLSVLPILNDGLGMKDISELVIGCYMVCVVLAQKAALQDNVLDSLMEAIVASWTVETVSSGLICLSVLAQQKPEPTIPKRVFKAILRLENPIQQLSEISSQYKTSHLLLAIIAGCVDDLSKQEDTVRLDLLSLMFESQILGESETGQGMGIVLRAASSAHKDGVMSLNAQTHLADLVQHFTRSESLQPIFQKTIAESALDVSALEHNLQTVIESAQAPKALEDVEMDEAAPKQQEDEFPSLLQSLESEPLMKSSFLSAQSIPVFDRLAQAFALAIGSQEKLESFANLTVLGKSNATKSPQYLSFFVRVFSGSYPIGTRVTALNMLSSFLSDSPTDIDFQALVPFVLVALGDVSERIRREAAAVLAALGALYKKAKKDNPSVWASDSLYGQAKQSKGVNWLSGRDMSKIFERALLPGLEEYVLDPSHIGRVVEATLRGTLADSDASELKKPLRLALFSFLCSHVVQLPLFAPKLGLLDLLNRVEKAGGTTRTKELEPLLKMWRDLGVEKAKDICDKERISAAEMEAQVVKIVTPKEKDAIVLLLSIINPYSNSLSPSFVAAVFGRMKDIWAKIPEDRQEFAAERLFEVSLQESDSPLVDGCREVLRSVQVPGPVLVRFVKQIPVSVTDIESLGPAPKRRRTSQNNMVAMTVKDEAKLSKLMEKMTFILELVDGSKPEDHPELADGLFQTLAALHHFKSQIQSGMSYLLSLALGSLLAIVNKSRATAKPLFNTSVIRADLVVDCVRTTESPQVQNAALLLVAGLSVIAPELVLHSVMPIFTFMGSSVLRKDDEYSVSVIDQTIDQVVPALIQSLRNQKRDVVSGTSELLLSFTAAFEHIPSHRRLRLFHALITKLGTQDFLFAVLAMLANRYSMDKDVLILMTGLASDATAAVELCTYCKYLELVTDSLRPKPGISQVLLGIGSDDGREPQKVAVDLLRALAYLFRHSSIKSKMAKALAVEGGEESEQIRSYFSQILTQILTIGDTMQEMKAVSQASGEVLSALFGTLSLIDFLDTIEILLQRPGDELRRKVLRLLEGRLRQNPERDSPSQNRMLDFLPTLVTIVESSPDILLKHAAVACIDRITEKYGKKDPSKVIPASKAIAGQSCIGQEDDRIRIMGVLCLASMAEVLGQAMIPALPDALNRSLSLLEVSMEAGKENARLHDAVYSLFSALFVHLPYMISASHLDQILLLSFRSAGSEELEDESRQEALRLMARKADLAATFGVVNRNWTQAVAAGPEATKETLETLSLAIEKHPKSATMKNLPVLTEILFKAFDLRREQVALGSKAKFDADDLEEAEEIVNDVTIKMIYKLNDSTFRPIFTKLFDWATTGISKKDRHGDVSRLTTFYKFLEVFFGTLQSIVTGYASYIIENVVAVLGKASPSNQNTRTLWLSTLRMLRNAFEHDQDEFWQSPSHLNQISEPLISQLAHATTSSLANTVIAEAVPAITELAVAADSTDNHKELNTVLMRFLRPSAGPSGKAAGGENPHTRFAALKAEQSLTEQLGEEWLALLPEMLPYISELMEDEDENVEREVRRWVKQIEDVLGEKLDDMLT.

Residues 582 to 619 (IDFQALVPFVLVALGDVSERIRREAAAVLAALGALYKK) form an HEAT 1 repeat. 2 consecutive transmembrane segments (helical) span residues 945–965 (IQSG…AIVN) and 1001–1021 (ALLL…HSVM). HEAT repeat units lie at residues 1045–1082 (QTID…AFEH), 1252–1289 (LSLI…QNPE), 1296–1334 (NRML…KYGK), and 1757–1794 (ALLP…VLGE).

Belongs to the HEATR1/UTP10 family. As to quaternary structure, component of the ribosomal small subunit (SSU) processome.

The protein localises to the nucleus. It localises to the nucleolus. Its subcellular location is the membrane. Functionally, involved in nucleolar processing of pre-18S ribosomal RNA. Involved in ribosome biosynthesis. The polypeptide is U3 small nucleolar RNA-associated protein 10 (Aspergillus terreus (strain NIH 2624 / FGSC A1156)).